Reading from the N-terminus, the 745-residue chain is 5-methyltetrahydropteroyltriglutamate--homocysteine methyltransferase (745 aa).

Residues 17-20 (RELK) and K111 each bind 5-methyltetrahydropteroyltri-L-glutamate. L-homocysteine-binding positions include 421–423 (IGS) and E474. Residues 421–423 (IGS) and E474 contribute to the L-methionine site. Residues 505-506 (RC) and W551 each bind 5-methyltetrahydropteroyltri-L-glutamate. Position 589 (D589) interacts with L-homocysteine. D589 contributes to the L-methionine binding site. E595 is a 5-methyltetrahydropteroyltri-L-glutamate binding site. Residues H631, C633, and E655 each contribute to the Zn(2+) site. The Proton donor role is filled by H684. A Zn(2+)-binding site is contributed by C716.

Belongs to the vitamin-B12 independent methionine synthase family. Zn(2+) serves as cofactor.

It carries out the reaction 5-methyltetrahydropteroyltri-L-glutamate + L-homocysteine = tetrahydropteroyltri-L-glutamate + L-methionine. The protein operates within amino-acid biosynthesis; L-methionine biosynthesis via de novo pathway; L-methionine from L-homocysteine (MetE route): step 1/1. Catalyzes the transfer of a methyl group from 5-methyltetrahydrofolate to homocysteine resulting in methionine formation. In Thermodesulfovibrio yellowstonii (strain ATCC 51303 / DSM 11347 / YP87), this protein is 5-methyltetrahydropteroyltriglutamate--homocysteine methyltransferase.